The following is a 98-amino-acid chain: (4S)-4-hydroxy-5-phosphonooxypentane-2,3-dione isomerase (98 aa).

Residues asparagine 2–phenylalanine 91 enclose the ABM domain.

Belongs to the LsrG family. In terms of assembly, homodimer.

It localises to the cytoplasm. It catalyses the reaction (2S)-2-hydroxy-3,4-dioxopentyl phosphate = 3-hydroxy-2,4-dioxopentyl phosphate. Functionally, involved in the degradation of phospho-AI-2, thereby terminating induction of the lsr operon and closing the AI-2 signaling cycle. Catalyzes the conversion of (4S)-4-hydroxy-5-phosphonooxypentane-2,3-dione (P-DPD) to 3-hydroxy-5-phosphonooxypentane-2,4-dione (P-HPD). The polypeptide is (4S)-4-hydroxy-5-phosphonooxypentane-2,3-dione isomerase (Klebsiella pneumoniae subsp. pneumoniae (strain ATCC 700721 / MGH 78578)).